The sequence spans 349 residues: Twinfilin-2-A (349 aa).

ADF-H domains follow at residues 4–139 and 177–313; these read QTGI…KHVS and GLSF…DEVH. The disordered stretch occupies residues 321 to 349; that stretch reads QAFAKPKGPAGKRGQKRLIKGPGENGEDS.

This sequence belongs to the actin-binding proteins ADF family. Twinfilin subfamily. As to quaternary structure, interacts with G-actin; ADP-actin form and capping protein (CP).

It localises to the cytoplasm. The protein resides in the cytoskeleton. Its subcellular location is the perinuclear region. Functionally, actin-binding protein involved in motile and morphological processes. Inhibits actin polymerization, likely by sequestering G-actin. This Xenopus laevis (African clawed frog) protein is Twinfilin-2-A (twf2-a).